Consider the following 1396-residue polypeptide: Probable ATP-dependent RNA helicase spindle-E (1396 aa).

A disordered region spans residues M1–K34. Over residues E16–E30 the composition is skewed to acidic residues. Positions L68 to L234 constitute a Helicase ATP-binding domain. G81–T88 serves as a coordination point for ATP. Positions D180–H183 match the DEAH box motif. The Helicase C-terminal domain occupies K292–E468. Residues N885 to L950 form the Tudor domain.

It belongs to the DEAD box helicase family. DEAH subfamily.

Its subcellular location is the cytoplasm. The enzyme catalyses ATP + H2O = ADP + phosphate + H(+). Functionally, probable ATP-binding RNA helicase which plays a central role during gametogenesis by repressing transposable elements and preventing their mobilization, which is essential for the germline integrity. Acts via the piRNA metabolic process, which mediates the repression of transposable elements during meiosis by forming complexes composed of piRNAs and Piwi proteins and govern the methylation and subsequent repression of transposons. This Culex quinquefasciatus (Southern house mosquito) protein is Probable ATP-dependent RNA helicase spindle-E (spn-E).